The chain runs to 103 residues: Large ribosomal subunit protein bL21 (103 aa).

Belongs to the bacterial ribosomal protein bL21 family. In terms of assembly, part of the 50S ribosomal subunit. Contacts protein L20.

Its function is as follows. This protein binds to 23S rRNA in the presence of protein L20. The polypeptide is Large ribosomal subunit protein bL21 (Photobacterium profundum (strain SS9)).